Consider the following 432-residue polypeptide: Glutamate-1-semialdehyde 2,1-aminomutase (432 aa).

At lysine 267 the chain carries N6-(pyridoxal phosphate)lysine.

It belongs to the class-III pyridoxal-phosphate-dependent aminotransferase family. HemL subfamily. Homodimer. Pyridoxal 5'-phosphate serves as cofactor.

It is found in the cytoplasm. It carries out the reaction (S)-4-amino-5-oxopentanoate = 5-aminolevulinate. It functions in the pathway porphyrin-containing compound metabolism; protoporphyrin-IX biosynthesis; 5-aminolevulinate from L-glutamyl-tRNA(Glu): step 2/2. In Syntrophus aciditrophicus (strain SB), this protein is Glutamate-1-semialdehyde 2,1-aminomutase.